A 298-amino-acid polypeptide reads, in one-letter code: Probable endonuclease 4 (298 aa).

H69, H111, E146, D180, H183, H215, D228, H230, and E260 together coordinate Zn(2+).

Belongs to the AP endonuclease 2 family. Zn(2+) serves as cofactor.

It carries out the reaction Endonucleolytic cleavage to 5'-phosphooligonucleotide end-products.. Its function is as follows. Endonuclease IV plays a role in DNA repair. It cleaves phosphodiester bonds at apurinic or apyrimidinic (AP) sites, generating a 3'-hydroxyl group and a 5'-terminal sugar phosphate. The sequence is that of Probable endonuclease 4 from Bacillus anthracis (strain A0248).